A 525-amino-acid polypeptide reads, in one-letter code: DEAD-box ATP-dependent RNA helicase CshA (525 aa).

A Q motif motif is present at residues 2 to 30; the sequence is TTFRELGLSDSLLQSVESMGFEEATPIQA. The Helicase ATP-binding domain occupies 33–203; that stretch reads IPHALQGKDI…ERFMTEPQHI (171 aa). 46-53 is an ATP binding site; sequence AQTGTGKT. A DEAD box motif is present at residues 151-154; sequence DEAD. In terms of domain architecture, Helicase C-terminal spans 214 to 374; it reads NIQQFYLEVQ…RMDAPTLDEA (161 aa). Residues 428–525 are disordered; that stretch reads TTPIALTSEP…RKHHSRKPQA (98 aa). Positions 458–503 are enriched in basic and acidic residues; sequence DGNRNRSRDGRGGDGRNRDRNRDGRNRDGNRDRNRDGGNRGRRGEG. Over residues 515-525 the composition is skewed to basic residues; it reads ERKHHSRKPQA.

This sequence belongs to the DEAD box helicase family. CshA subfamily. Oligomerizes, may be a member of the RNA degradosome.

The protein localises to the cytoplasm. The enzyme catalyses ATP + H2O = ADP + phosphate + H(+). Functionally, DEAD-box RNA helicase possibly involved in RNA degradation. Unwinds dsRNA in both 5'- and 3'-directions, has RNA-dependent ATPase activity. The protein is DEAD-box ATP-dependent RNA helicase CshA of Bacillus cereus (strain ATCC 10987 / NRS 248).